Consider the following 126-residue polypeptide: Methylglyoxal synthase (126 aa).

The MGS-like domain maps to 1-126 (MEKKIALIAH…LIKGFEGLNT (126 aa)). Substrate-binding positions include H10, K14, 36–39 (TGTT), and 56–57 (SG). The active-site Proton donor/acceptor is the D62. H89 serves as a coordination point for substrate.

The protein belongs to the methylglyoxal synthase family.

The enzyme catalyses dihydroxyacetone phosphate = methylglyoxal + phosphate. In terms of biological role, catalyzes the formation of methylglyoxal from dihydroxyacetone phosphate. The protein is Methylglyoxal synthase of Borrelia garinii subsp. bavariensis (strain ATCC BAA-2496 / DSM 23469 / PBi) (Borreliella bavariensis).